A 234-amino-acid polypeptide reads, in one-letter code: Peptidase E (234 aa).

Residues serine 123, aspartate 138, and histidine 160 each act as charge relay system in the active site.

This sequence belongs to the peptidase S51 family.

The protein resides in the cytoplasm. The catalysed reaction is Dipeptidase E catalyzes the hydrolysis of dipeptides Asp-|-Xaa. It does not act on peptides with N-terminal Glu, Asn or Gln, nor does it cleave isoaspartyl peptides.. Its function is as follows. Hydrolyzes dipeptides containing N-terminal aspartate residues. May play a role in allowing the cell to use peptide aspartate to spare carbon otherwise required for the synthesis of the aspartate family of amino acids. The protein is Peptidase E of Pasteurella multocida (strain Pm70).